The chain runs to 297 residues: Probable endonuclease 4 (297 aa).

The Zn(2+) site is built by histidine 69, histidine 110, glutamate 145, aspartate 179, histidine 182, histidine 214, aspartate 227, histidine 229, and glutamate 259.

Belongs to the AP endonuclease 2 family. Zn(2+) is required as a cofactor.

It carries out the reaction Endonucleolytic cleavage to 5'-phosphooligonucleotide end-products.. Endonuclease IV plays a role in DNA repair. It cleaves phosphodiester bonds at apurinic or apyrimidinic (AP) sites, generating a 3'-hydroxyl group and a 5'-terminal sugar phosphate. In Oceanobacillus iheyensis (strain DSM 14371 / CIP 107618 / JCM 11309 / KCTC 3954 / HTE831), this protein is Probable endonuclease 4.